We begin with the raw amino-acid sequence, 129 residues long: Glycine cleavage system H protein (129 aa).

Residues 24 to 106 form the Lipoyl-binding domain; the sequence is HAVVGITDFA…YDGGWLFKLA (83 aa). Lysine 65 is modified (N6-lipoyllysine).

The protein belongs to the GcvH family. As to quaternary structure, the glycine cleavage system is composed of four proteins: P, T, L and H. (R)-lipoate is required as a cofactor.

Its function is as follows. The glycine cleavage system catalyzes the degradation of glycine. The H protein shuttles the methylamine group of glycine from the P protein to the T protein. This chain is Glycine cleavage system H protein, found in Hydrogenovibrio crunogenus (strain DSM 25203 / XCL-2) (Thiomicrospira crunogena).